We begin with the raw amino-acid sequence, 474 residues long: Hepatocyte nuclear factor 4-alpha (474 aa).

The nuclear receptor DNA-binding region spans 57–132 (SALCAICGDR…AGMKKEAVQN (76 aa)). 2 NR C4-type zinc fingers span residues 60–80 (CAIC…CDGC) and 96–120 (CRFS…LKKC). Phosphoserine; by PKA occurs at positions 142 and 143. Position 144 is a phosphotyrosine (Tyr144). Positions 147–377 (SSLPSINALL…NLLQEMLLGG (231 aa)) constitute an NR LBD domain. Thr166 bears the Phosphothreonine mark. Phosphoserine is present on Ser167. Residues Lys234 and Lys307 each participate in a glycyl lysine isopeptide (Lys-Gly) (interchain with G-Cter in ubiquitin) cross-link. Phosphoserine; by AMPK is present on Ser313. The 9aaTAD motif lies at 368-376 (NLLQEMLLG). Residues 413–450 (SNGQMCEWPRPRGQAATPETPQPSPPSGSGSESYKLLP) form a disordered region. Residues Thr429 and Thr432 each carry the phosphothreonine modification. At Ser436 the chain carries Phosphoserine. Lys458 carries the N6-acetyllysine modification.

It belongs to the nuclear hormone receptor family. NR2 subfamily. In terms of assembly, homodimerization is required for HNF4-alpha to bind to its recognition site. Interacts with CLOCK, BMAL1, CRY1, CRY2, PER1 and PER2. Interacts with NR0B2/SHP; the resulting heterodimer is transcriptionally inactive. Interacts with DDX3X; this interaction disrupts the interaction between HNF4 and NR0B2 that forms inactive heterodimers and enhances the formation of active HNF4 homodimers. In terms of processing, phosphorylation at Ser-313 by AMPK reduces the ability to form homodimers and bind DNA. Phosphorylated in the recognition sequence R-R-S-S near the DNA-binding domain; phosphorylation results in decrease in DNA-binding activity. Phosphorylation of HNF4 depends on the diet and is decreased by a carbohydrate-rich diet and is increased by fasting. Post-translationally, the N-terminus is blocked. Acetylation at Lys-458 lowers transcriptional activation by about two-fold. Liver, kidney and intestine.

The protein localises to the nucleus. Functionally, transcriptional regulator which controls the expression of hepatic genes during the transition of endodermal cells to hepatic progenitor cells, facilitating the recruitment of RNA pol II to the promoters of target genes. Activates the transcription of CYP2C38. Represses the CLOCK-BMAL1 transcriptional activity and is essential for circadian rhythm maintenance and period regulation in the liver and colon cells. This chain is Hepatocyte nuclear factor 4-alpha (Hnf4a), found in Rattus norvegicus (Rat).